Here is a 286-residue protein sequence, read N- to C-terminus: Release factor glutamine methyltransferase (286 aa).

S-adenosyl-L-methionine is bound by residues Asp148 and Asn194. 194 to 197 (NPPY) is a binding site for substrate.

It belongs to the protein N5-glutamine methyltransferase family. PrmC subfamily.

It catalyses the reaction L-glutaminyl-[peptide chain release factor] + S-adenosyl-L-methionine = N(5)-methyl-L-glutaminyl-[peptide chain release factor] + S-adenosyl-L-homocysteine + H(+). Functionally, methylates the class 1 translation termination release factors RF1/PrfA and RF2/PrfB on the glutamine residue of the universally conserved GGQ motif. The polypeptide is Release factor glutamine methyltransferase (Leptospira interrogans serogroup Icterohaemorrhagiae serovar Lai (strain 56601)).